The sequence spans 403 residues: Nodal homolog (403 aa).

The first 18 residues, 1 to 18 (MAFLTAVLCFGFACMVQG), serve as a signal peptide directing secretion. The propeptide occupies 19–278 (VPSWLESRIP…RMPGIRRHRR (260 aa)). Residues Asn-68, Asn-133, and Asn-169 are each glycosylated (N-linked (GlcNAc...) asparagine). Residues 195-220 (AERGSGMSSAEFLDSPGDSPQYNPHH) form a disordered region. 3 cysteine pairs are disulfide-bonded: Cys-303-Cys-369, Cys-332-Cys-400, and Cys-336-Cys-402. N-linked (GlcNAc...) asparagine glycosylation occurs at Asn-341.

The protein belongs to the TGF-beta family. As to quaternary structure, homodimer; disulfide-linked. Interacts with, and is inhibited by cer1 and gdf10/bmp3b.

It localises to the secreted. Its function is as follows. Cooperation and regulatory loops of multiple nodals are essential for mesendoderm patterning in early embryos. Essential for mesoderm formation and axial patterning during embryonic development. Activates the activin-like signaling pathway to induce dorsal and ventral mesoderm in animal cap ectoderm. In addition, also dorsalizes ventral marginal zone (VMZ) tissues during gastrulation. Acts in a downstream signaling cascade via cripto and cer1 to mediate cardiogenesis in embryonic mesoderm. Directs the orientation of the left-right axis by driving the left-specific gene cascade in the left lateral plate mesoderm. The sequence is that of Nodal homolog from Xenopus tropicalis (Western clawed frog).